A 190-amino-acid chain; its full sequence is Imidazoleglycerol-phosphate dehydratase (190 aa).

Belongs to the imidazoleglycerol-phosphate dehydratase family.

Its subcellular location is the cytoplasm. The catalysed reaction is D-erythro-1-(imidazol-4-yl)glycerol 3-phosphate = 3-(imidazol-4-yl)-2-oxopropyl phosphate + H2O. It functions in the pathway amino-acid biosynthesis; L-histidine biosynthesis; L-histidine from 5-phospho-alpha-D-ribose 1-diphosphate: step 6/9. This chain is Imidazoleglycerol-phosphate dehydratase, found in Methanococcus maripaludis (strain DSM 14266 / JCM 13030 / NBRC 101832 / S2 / LL).